A 776-amino-acid chain; its full sequence is MSIPANVLMEISFQELTSKKSEEYERKRLNEIGDLLTPQKIEEVLNCKDTKQRNVSLEDIFQDFLNFIITKNQEMFSMDCNSICKSYVLKVAEEKIEKLLKENGTLKNEEKCLRMQIVAQEEYVAPLIQKLEIIEKKLDKSFRKNMEDELRITRLASENNVLISRIDRTKRHFSELFTQKQMLQLQNENFKDDYEKIKEENKRLYKERKSFLSKIEKSACEIHDLKESDSFKDHEILRLKEERTAAMQAIDDISGTIETIKSDCYKVESENKGLINEVMDMRNFVQQLEQELYAFEDDYSRIQNDEELLKVGMIHLNKSENRTVEEMKIGDFGNTEEAKDVCVSDEDIHNVNIKQITTLIGKMSQVQIECKRLRKENLFLQSERTHLLRELEELRHLATSAKEDFVKVEKLNKIIKDENENLKEYIRNNSLSFQATAGELTQCKQLPQPRITGNDQENSHYTGAGNNCLELVGKENNCKNQYPQYFSNIDESNAFINNQCLELEALNRKNDLIRGELDSLKEKNLVAQKQLKSANNTLHVRAKHIQILENTNQSLKKNLENGRAEFRLKEIALIDLANQQIKNQDKTIHDLNTELCSLTLDYCNTAVERDTLRFRALEYLDHNKQTNPLPYHIVYMFSFETSPTVFQTSPEEDKENVNNIKISQPRNSLQTNGYIEGMANNVLDASFNVEDESHAISDSELGYFCEDQSNIYEVEDMRYYLFYTEEEKNMLPGFIVNARPANLDLFPCCYETTDKRSKHLKNMLNKKKLIKHIFHL.

5 coiled-coil regions span residues 87-122 (YVLKVAEEKIEKLLKENGTLKNEEKCLRMQIVAQEE), 173-227 (FSEL…DLKE), 265-307 (YKVE…NDEE), 362-430 (KMSQ…RNNS), and 496-595 (INNQ…NTEL).

The protein is Meiotic expression up-regulated protein 1/2 (meu1) of Schizosaccharomyces pombe (strain 972 / ATCC 24843) (Fission yeast).